A 295-amino-acid polypeptide reads, in one-letter code: Protein PAR32 (295 aa).

The residue at position 2 (Ala-2) is an N-acetylalanine. Phosphoserine occurs at positions 36, 39, 47, 123, 138, 141, and 147. A compositionally biased stretch (polar residues) spans Ser-134–Ala-153. 2 disordered regions span residues Ser-134–Val-156 and Thr-217–Asn-295. Over residues Thr-217–Gly-227 the composition is skewed to basic residues. Ser-246 bears the Phosphoserine mark. Positions Ser-246–His-256 are enriched in polar residues. The segment covering Lys-265 to Lys-274 has biased composition (basic and acidic residues). Over residues Glu-275–Ser-284 the composition is skewed to basic residues. Residues Gly-285–Asn-295 show a composition bias toward low complexity.

In terms of processing, hyperphosphorylated after treatment with rapamycin in a TAP42-dependent manner.

Its subcellular location is the cytoplasm. Its function is as follows. Involved in resistance to cisplatin. The protein is Protein PAR32 (PAR32) of Saccharomyces cerevisiae (strain ATCC 204508 / S288c) (Baker's yeast).